The following is a 476-amino-acid chain: Calcitonin gene-related peptide type 1 receptor (476 aa).

An N-terminal signal peptide occupies residues Met-1–Ala-33. Topologically, residues Ser-34 to Leu-154 are extracellular. Intrachain disulfides connect Cys-63–Cys-89, Cys-80–Cys-120, and Cys-103–Cys-142. Asn-81, Asn-133, and Asn-138 each carry an N-linked (GlcNAc...) asparagine glycan. The helical transmembrane segment at Asn-155–Phe-179 threads the bilayer. Topologically, residues Tyr-180–Thr-190 are cytoplasmic. A helical membrane pass occupies residues Leu-191–Val-213. Residues Ala-214–Pro-224 are Extracellular-facing. Residues Val-225–His-253 form a helical membrane-spanning segment. The Cytoplasmic segment spans residues Thr-254–Leu-267. The chain crosses the membrane as a helical span at residues Met-268–Ala-288. Residues Arg-289–His-304 are Extracellular-facing. Residues Leu-305–Arg-329 form a helical membrane-spanning segment. Over Val-330–Asn-344 the chain is Cytoplasmic. Residues Leu-345–Leu-366 form a helical membrane-spanning segment. At Phe-367 to Asp-381 the chain is on the extracellular side. The helical transmembrane segment at Tyr-382–Phe-402 threads the bilayer. The Cytoplasmic portion of the chain corresponds to Asn-403–Met-476.

It belongs to the G-protein coupled receptor 2 family.

It localises to the cell membrane. Functionally, may function as G protein-coupled receptor for calcitonin-gene-related peptides and adrenomedullin. Specificity may be modulated by accessory proteins. May activate cAMP-dependent pathway. The protein is Calcitonin gene-related peptide type 1 receptor (calcrl) of Xenopus laevis (African clawed frog).